A 261-amino-acid chain; its full sequence is MAVISMKQLLEAGVHFGHQTRRWNPKMAKYIFTERNGIHVIDLQQTVKLADQAYDFVRDAAANDAVILFVGTKKQASEAIKEEAERAGQYYINHRWLGGTLTNWDTIQKRIARLKEIKQMEVDGIFDVLPKKEVALLNKQRARLEKFLGGIEDMPRIPDIIYIVDPHKEQIAVKEAKKLGIPVVAMVDTNADPDDIDVIIPANDDAIRAVKLITSKLADAVIEGRQGEDSVEAVEAELAAGETQADSIEEIVEVVEGANEN.

Belongs to the universal ribosomal protein uS2 family.

This is Small ribosomal subunit protein uS2 from Streptococcus mutans serotype c (strain ATCC 700610 / UA159).